The sequence spans 206 residues: Small ribosomal subunit protein uS4 (206 aa).

An S4 RNA-binding domain is found at 96–156 (CRLDNVVYRM…EKSKNQLRIA (61 aa)).

Belongs to the universal ribosomal protein uS4 family. Part of the 30S ribosomal subunit. Contacts protein S5. The interaction surface between S4 and S5 is involved in control of translational fidelity.

Its function is as follows. One of the primary rRNA binding proteins, it binds directly to 16S rRNA where it nucleates assembly of the body of the 30S subunit. Functionally, with S5 and S12 plays an important role in translational accuracy. The chain is Small ribosomal subunit protein uS4 from Pseudomonas aeruginosa (strain LESB58).